Here is a 139-residue protein sequence, read N- to C-terminus: Small ribosomal subunit protein bS16 (139 aa).

A disordered region spans residues 84–139; it reads KGEPAPAPLLQPAEKAARPSFEAIGGEDEGKGEAITQKKKADKRDEAAAESSASEA.

It belongs to the bacterial ribosomal protein bS16 family.

This Streptomyces lividans protein is Small ribosomal subunit protein bS16.